A 216-amino-acid polypeptide reads, in one-letter code: UPF0301 protein Nham_3550 (216 aa).

Positions 1-10 (MSAARKRPGT) are enriched in basic residues. The interval 1-25 (MSAARKRPGTGRRQTDDADTGAPDQ) is disordered.

This sequence belongs to the UPF0301 (AlgH) family.

The sequence is that of UPF0301 protein Nham_3550 from Nitrobacter hamburgensis (strain DSM 10229 / NCIMB 13809 / X14).